Reading from the N-terminus, the 35-residue chain is Ranatuerin-2SPb (35 aa).

A disulfide bond links Cys28 and Cys33.

In terms of tissue distribution, expressed by the skin glands.

The protein resides in the secreted. Functionally, antibacterial activity against Gram-positive bacterium S.aureus. Shows no detectable hemolytic activity towards human erythrocytes. The sequence is that of Ranatuerin-2SPb from Lithobates septentrionalis (Mink frog).